The following is a 617-amino-acid chain: Acyl-CoA dehydrogenase family member 11 (617 aa).

Positions 1–47 (MHRIGNAVRMASSSSANATITARHTQYSHAKTGGFSQTGPTLHNPYK) are disordered. Over residues 11–22 (ASSSSANATITA) the composition is skewed to low complexity. Polar residues predominate over residues 23-41 (RHTQYSHAKTGGFSQTGPT). Residues 206–215 (QWMTEKKGGS) and 241–243 (FSS) each bind FAD. Residue Ser215 coordinates substrate. Substrate is bound by residues Ser267 and Arg334. Residues Arg359, 366-369 (QSKW), Glu437, Gly441, and 464-466 (EGT) contribute to the FAD site.

It belongs to the acyl-CoA dehydrogenase family. In terms of assembly, homotetramer; dimer of dimers.

Functionally, promotes adaption to elevated temperatures by regulating expression of the lipid desaturase, fat-7. Binds selectively and with high affinity to fatty acids with chain lengths from C10 to C12 and prevents them from activating fat-7 expression mediated by the nuclear hormone receptor nhr-49, leading to low levels of membrane lipid desaturation and membrane fluidity for adaption to heat. The sequence is that of Acyl-CoA dehydrogenase family member 11 from Caenorhabditis elegans.